A 354-amino-acid chain; its full sequence is Protein-glutamate methylesterase/protein-glutamine glutaminase of group 3 operon (354 aa).

The Response regulatory domain maps to 3–121 (RILLATSTVE…MQLEQPAIEK (119 aa)). In terms of domain architecture, CheB-type methylesterase spans 158–340 (PIGIVGIAAS…LESIAENITA (183 aa)). Active-site residues include serine 167, histidine 194, and aspartate 287.

It belongs to the CheB family.

The protein resides in the cytoplasm. It carries out the reaction [protein]-L-glutamate 5-O-methyl ester + H2O = L-glutamyl-[protein] + methanol + H(+). The catalysed reaction is L-glutaminyl-[protein] + H2O = L-glutamyl-[protein] + NH4(+). Functionally, involved in chemotaxis. Part of a chemotaxis signal transduction system that modulates chemotaxis in response to various stimuli. Catalyzes the demethylation of specific methylglutamate residues introduced into the chemoreceptors (methyl-accepting chemotaxis proteins or MCP) by CheR. Also mediates the irreversible deamidation of specific glutamine residues to glutamic acid. This chain is Protein-glutamate methylesterase/protein-glutamine glutaminase of group 3 operon, found in Rhizobium meliloti (strain 1021) (Ensifer meliloti).